A 614-amino-acid chain; its full sequence is Membrane protein insertase YidC (614 aa).

Residues 6 to 26 (IVLLIIFSTSLLFLWDAWIKE) traverse the membrane as a helical segment. 2 stretches are compositionally biased toward polar residues: residues 34-48 (PAITQADSSAGSTQS) and 60-70 (ELTSSQASPDT). A disordered region spans residues 34 to 87 (PAITQADSSAGSTQSRNDDSLPVPGSELTSSQASPDTNGIPASGGNGDSVTPRL). The next 4 membrane-spanning stretches (helical) occupy residues 380–400 (WGVAIILLTMTVKLLFFPLSA), 450–470 (FPILVQIPVFIALYWTILAAV), 484–504 (LSSPDPFYMLPLLMGISMFVQ), and 524–544 (PVAFSAIFFFFPAGLVLYSLV). The segment at 562–614 (TAPSKDTPEPPVSKQVNSSENPETTANSPADSPKQPQTPANNPRKMYKRTRKK) is disordered. Over residues 575–602 (KQVNSSENPETTANSPADSPKQPQTPAN) the composition is skewed to polar residues.

The protein belongs to the OXA1/ALB3/YidC family. Type 1 subfamily. In terms of assembly, interacts with the Sec translocase complex via SecD. Specifically interacts with transmembrane segments of nascent integral membrane proteins during membrane integration.

Its subcellular location is the cell inner membrane. Its function is as follows. Required for the insertion and/or proper folding and/or complex formation of integral membrane proteins into the membrane. Involved in integration of membrane proteins that insert both dependently and independently of the Sec translocase complex, as well as at least some lipoproteins. Aids folding of multispanning membrane proteins. This Nitrosomonas europaea (strain ATCC 19718 / CIP 103999 / KCTC 2705 / NBRC 14298) protein is Membrane protein insertase YidC.